The following is a 216-amino-acid chain: Ras-related protein Rab-11A (216 aa).

Gly-2 is subject to N-acetylglycine. Residues Ser-20, Gly-21, Val-22, Gly-23, Lys-24, Ser-25, Asn-26, Asn-37, Leu-38, Ser-40, Ser-42, and Thr-43 each contribute to the GTP site. Mg(2+) is bound at residue Ser-25. The Switch 1 motif lies at 36–47 (FNLESKSTIGVE). Mg(2+) is bound by residues Thr-43 and Asp-66. The Switch 2 signature appears at 67-86 (TAGQERYRAITSAYYRGAVG). 6 residues coordinate GTP: Gly-69, Asn-124, Lys-125, Asp-127, Ala-155, and Leu-156. The disordered stretch occupies residues 183 to 208 (DRRENDMSPSNNVVPIHVPPTTENKP). S-geranylgeranyl cysteine attachment occurs at residues Cys-212 and Cys-213. The residue at position 213 (Cys-213) is a Cysteine methyl ester. Positions 214–216 (QNI) are cleaved as a propeptide — removed in mature form.

It belongs to the small GTPase superfamily. Rab family. It depends on Mg(2+) as a cofactor.

It is found in the cell membrane. It localises to the endosome membrane. Its subcellular location is the recycling endosome membrane. The protein localises to the cleavage furrow. The protein resides in the cytoplasmic vesicle. It is found in the phagosome. It localises to the cytoplasmic vesicle membrane. Its subcellular location is the golgi apparatus. The protein localises to the trans-Golgi network. It catalyses the reaction GTP + H2O = GDP + phosphate + H(+). With respect to regulation, regulated by guanine nucleotide exchange factors (GEFs) which promote the exchange of bound GDP for free GTP. Regulated by GTPase activating proteins (GAPs) which increase the GTP hydrolysis activity. Inhibited by GDP dissociation inhibitors (GDIs) which prevent Rab-GDP dissociation. The small GTPases Rab are key regulators of intracellular membrane trafficking, from the formation of transport vesicles to their fusion with membranes. Rabs cycle between an inactive GDP-bound form and an active GTP-bound form that is able to recruit to membranes different set of downstream effectors directly responsible for vesicle formation, movement, tethering and fusion. The small Rab GTPase RAB11A regulates endocytic recycling. May also be involved in the regulation of preciliary trafficking and neosynthesized protein export. In Gallus gallus (Chicken), this protein is Ras-related protein Rab-11A (RAB11A).